We begin with the raw amino-acid sequence, 291 residues long: Transcription initiation factor IIE subunit beta (291 aa).

An N-acetylmethionine modification is found at Met-1. Basic and acidic residues predominate over residues Met-1 to Lys-13. Residues Met-1–Asn-63 are disordered. The segment covering Gly-50–Phe-62 has biased composition (polar residues). A Phosphoserine modification is found at Ser-61. The TFIIE beta DNA-binding region spans Ala-66–Arg-146. Lys-74 carries the post-translational modification N6-acetyllysine. Residues Ser-243–Thr-272 are disordered. Basic residues predominate over residues Gln-257–Lys-271.

This sequence belongs to the TFIIE beta subunit family. In terms of assembly, tetramer of two alpha and two beta chains. Interacts with FACT subunit SUPT16H. Interacts with ATF7IP. Interacts with SND1. Part of TBP-based Pol II pre-initiation complex (PIC), in which Pol II core assembles with general transcription factors and other specific initiation factors including GTF2E1, GTF2E2, GTF2F1, GTF2F2, TCEA1, ERCC2, ERCC3, GTF2H2, GTF2H3, GTF2H4, GTF2H5, GTF2A1, GTF2A2, GTF2B and TBP; this large multi-subunit PIC complex mediates DNA unwinding and targets Pol II core to the transcription start site where the first phosphodiester bond forms.

It is found in the nucleus. Recruits TFIIH to the initiation complex and stimulates the RNA polymerase II C-terminal domain kinase and DNA-dependent ATPase activities of TFIIH. Both TFIIH and TFIIE are required for promoter clearance by RNA polymerase. This Homo sapiens (Human) protein is Transcription initiation factor IIE subunit beta (GTF2E2).